Reading from the N-terminus, the 275-residue chain is Penicillin-insensitive murein endopeptidase (275 aa).

Positions 1–19 (MKNWIVGMVALVTMVPVMA) are cleaved as a signal peptide. Disulfide bonds link Cys44-Cys264, Cys187-Cys235, and Cys216-Cys223. Zn(2+)-binding residues include His110, His113, Asp120, Asp147, and His211. A disordered region spans residues 227 to 262 (DTPPPGDGCGAELESWFQPPPPSAKPGKTLPPPLPP). The segment covering 244 to 262 (QPPPPSAKPGKTLPPPLPP) has biased composition (pro residues).

It belongs to the peptidase M74 family. As to quaternary structure, dimer. Zn(2+) serves as cofactor.

The protein localises to the periplasm. Functionally, murein endopeptidase that cleaves the D-alanyl-meso-2,6-diamino-pimelyl amide bond that connects peptidoglycan strands. Likely plays a role in the removal of murein from the sacculus. This is Penicillin-insensitive murein endopeptidase from Yersinia pestis.